The following is a 497-amino-acid chain: RNA polymerase sigma factor SigA (497 aa).

2 disordered regions span residues 1–20 and 62–86; these read MSTDKKTLGEKPNSTKPELS and KTLHENKESDVPKKRRGRKPKHAPL. Positions 63-73 are enriched in basic and acidic residues; that stretch reads TLHENKESDVP. The span at 74–84 shows a compositional bias: basic residues; it reads KKRRGRKPKHA. Positions 250-320 are sigma-70 factor domain-2; sequence LVTSNLRLVV…TRAIADQART (71 aa). The short motif at 274-277 is the Interaction with polymerase core subunit RpoC element; that stretch reads DLIQ. A sigma-70 factor domain-3 region spans residues 329 to 410; sequence ETINRLAKAE…DTDAQTPDEF (82 aa). The segment at 423 to 478 is sigma-70 factor domain-4; that stretch reads LLNNNLSEQEELIVRMRIGMPPYNEPKTLDEVGQKILIPREKIRQIENKAIRKLRH. A DNA-binding region (H-T-H motif) is located at residues 451–470; the sequence is LDEVGQKILIPREKIRQIEN.

This sequence belongs to the sigma-70 factor family. RpoD/SigA subfamily. Interacts transiently with the RNA polymerase catalytic core.

The protein localises to the cytoplasm. Its function is as follows. Sigma factors are initiation factors that promote the attachment of RNA polymerase to specific initiation sites and are then released. This sigma factor is the primary sigma factor during exponential growth. The sequence is that of RNA polymerase sigma factor SigA from Mycoplasma genitalium (strain ATCC 33530 / DSM 19775 / NCTC 10195 / G37) (Mycoplasmoides genitalium).